Consider the following 238-residue polypeptide: Endo-chitosanase (238 aa).

The first 17 residues, 1–17, serve as a signal peptide directing secretion; that stretch reads MRLSEILTVALVTGATA. An N-linked (GlcNAc...) asparagine glycan is attached at N83.

This sequence belongs to the glycosyl hydrolase 75 family.

The protein resides in the secreted. The catalysed reaction is Endohydrolysis of beta-(1-&gt;4)-linkages between D-glucosamine residues in a partly acetylated chitosan.. In terms of biological role, chitosanase catalyzing the endo-type cleavage of chitosan, the deacylated form of chitin. Chitosanase may be crucial in the degradation of the deacetylated portion of chitin in the fungal cell wall. Chitoolisaccharides produced by the hydrolysis of partially N-acetylated chitosan are known to have many biological activities, including antibacterial activity, immune-enhancing effects, and elicitor activity. The chitosans with higher degrees of deacetylation were shown to be the better substrates. Chitodimer, chitotrimer, and chitotetramer are the major products but monoacetyl chitodimer, monoacetyl chitotrimer, and monoacetyl chitotetramer are also produced. The protein is Endo-chitosanase (csn) of Aspergillus fumigatus (Neosartorya fumigata).